Reading from the N-terminus, the 293-residue chain is 4-diphosphocytidyl-2-C-methyl-D-erythritol kinase (293 aa).

Lysine 16 is an active-site residue. 99–109 (PMGAGLGGGSS) serves as a coordination point for ATP. Residue aspartate 141 is part of the active site.

It belongs to the GHMP kinase family. IspE subfamily.

The catalysed reaction is 4-CDP-2-C-methyl-D-erythritol + ATP = 4-CDP-2-C-methyl-D-erythritol 2-phosphate + ADP + H(+). It participates in isoprenoid biosynthesis; isopentenyl diphosphate biosynthesis via DXP pathway; isopentenyl diphosphate from 1-deoxy-D-xylulose 5-phosphate: step 3/6. Its function is as follows. Catalyzes the phosphorylation of the position 2 hydroxy group of 4-diphosphocytidyl-2C-methyl-D-erythritol. This is 4-diphosphocytidyl-2-C-methyl-D-erythritol kinase from Paraburkholderia phytofirmans (strain DSM 17436 / LMG 22146 / PsJN) (Burkholderia phytofirmans).